We begin with the raw amino-acid sequence, 609 residues long: MCGIVGYIGGRTALPFLVDGLKRLEYRGYDSAGIATVGESGLELVRAKGKLHNLEEKLNGVAQSTGTVGIGHTRWATHGKPEEHNAHPHTDASGRLAVIQNGIIENYAELRLGLKERGCLFKSETDTEVIPHLIACRLAGHSLLEAVLAAVVELKGAFAIAVVSADFPDELIVVRQQAPLVIGFGEGENYFASDVPAIVSHTTRVLTLQDGECARLTRDEVQIHDFSGARLRRTPRSLNWNPSLVEKRGFRHFMLKEIHEQPGVIRDTLEDRIGDATGPIRLGLSSDLFADLERIYIIACGTSWHASLVGKYLIEELAGIPTEVNYASEFRYCPPPLNARTLVIGVSQSGETGDTNAALTAAKARGVRLLGITNRPESSLGALVGELIDTRAGMEIGVAATKTFTAQLVAFYLLALHLAHLRGTQSGERIREILVGLQQLPAQIEGILDTQERYITELAREFDATRDFIFIGRGLNYPIALEGALKLKEISYIHAEGYPAGEMKHGPIALLDSEVPVVAIAVPGKVYEKTLSNAQEAKARDARLIGVAPLDEPAAVETFDQILPVPVVDEILSPILTVVPLQLLAYHIAARRGLDVDQPRNLAKSVTVE.

C2 serves as the catalytic Nucleophile; for GATase activity. The Glutamine amidotransferase type-2 domain maps to 2 to 219 (CGIVGYIGGR…DGECARLTRD (218 aa)). 2 consecutive SIS domains span residues 285-424 (SSDL…LRGT) and 458-599 (LARE…VDQP). K604 functions as the For Fru-6P isomerization activity in the catalytic mechanism.

In terms of assembly, homodimer.

It is found in the cytoplasm. The catalysed reaction is D-fructose 6-phosphate + L-glutamine = D-glucosamine 6-phosphate + L-glutamate. In terms of biological role, catalyzes the first step in hexosamine metabolism, converting fructose-6P into glucosamine-6P using glutamine as a nitrogen source. In Gloeobacter violaceus (strain ATCC 29082 / PCC 7421), this protein is Glutamine--fructose-6-phosphate aminotransferase [isomerizing].